Reading from the N-terminus, the 69-residue chain is DNA gyrase inhibitor YacG (69 aa).

The Zn(2+) site is built by C7, C10, C26, and C30.

The protein belongs to the DNA gyrase inhibitor YacG family. Interacts with GyrB. It depends on Zn(2+) as a cofactor.

Its function is as follows. Inhibits all the catalytic activities of DNA gyrase by preventing its interaction with DNA. Acts by binding directly to the C-terminal domain of GyrB, which probably disrupts DNA binding by the gyrase. The chain is DNA gyrase inhibitor YacG from Shewanella baltica (strain OS155 / ATCC BAA-1091).